A 131-amino-acid polypeptide reads, in one-letter code: Small ribosomal subunit protein uS8 (131 aa).

The protein belongs to the universal ribosomal protein uS8 family. As to quaternary structure, part of the 30S ribosomal subunit. Contacts proteins S5 and S12.

Functionally, one of the primary rRNA binding proteins, it binds directly to 16S rRNA central domain where it helps coordinate assembly of the platform of the 30S subunit. This chain is Small ribosomal subunit protein uS8, found in Wolinella succinogenes (strain ATCC 29543 / DSM 1740 / CCUG 13145 / JCM 31913 / LMG 7466 / NCTC 11488 / FDC 602W) (Vibrio succinogenes).